The chain runs to 230 residues: Orotidine 5'-phosphate decarboxylase (230 aa).

Substrate-binding positions include aspartate 8, lysine 32, 59–68 (DLKLYDIPNT), threonine 118, arginine 178, glutamine 187, glycine 207, and arginine 208. Lysine 61 (proton donor) is an active-site residue.

This sequence belongs to the OMP decarboxylase family. Type 1 subfamily. As to quaternary structure, homodimer.

The enzyme catalyses orotidine 5'-phosphate + H(+) = UMP + CO2. The protein operates within pyrimidine metabolism; UMP biosynthesis via de novo pathway; UMP from orotate: step 2/2. Its function is as follows. Catalyzes the decarboxylation of orotidine 5'-monophosphate (OMP) to uridine 5'-monophosphate (UMP). The polypeptide is Orotidine 5'-phosphate decarboxylase (Nautilia profundicola (strain ATCC BAA-1463 / DSM 18972 / AmH)).